The chain runs to 344 residues: Anthranilate phosphoribosyltransferase (344 aa).

5-phospho-alpha-D-ribose 1-diphosphate contacts are provided by residues Gly-85, 88–89, Thr-93, 95–98, 113–121, and Ser-125; these read GD, NIST, and KHGNRSVSS. Gly-85 is a binding site for anthranilate. Ser-97 serves as a coordination point for Mg(2+). Asn-116 provides a ligand contact to anthranilate. Arg-171 is a binding site for anthranilate. Positions 229 and 230 each coordinate Mg(2+).

Belongs to the anthranilate phosphoribosyltransferase family. Homodimer. Mg(2+) is required as a cofactor.

It carries out the reaction N-(5-phospho-beta-D-ribosyl)anthranilate + diphosphate = 5-phospho-alpha-D-ribose 1-diphosphate + anthranilate. The protein operates within amino-acid biosynthesis; L-tryptophan biosynthesis; L-tryptophan from chorismate: step 2/5. Its function is as follows. Catalyzes the transfer of the phosphoribosyl group of 5-phosphorylribose-1-pyrophosphate (PRPP) to anthranilate to yield N-(5'-phosphoribosyl)-anthranilate (PRA). The chain is Anthranilate phosphoribosyltransferase from Shewanella amazonensis (strain ATCC BAA-1098 / SB2B).